Consider the following 425-residue polypeptide: Serine/threonine-protein kinase VRK1 (425 aa).

One can recognise a Protein kinase domain in the interval Trp-38–Leu-329. ATP-binding positions include Val-44 to Leu-52 and Lys-72. Asp-178 serves as the catalytic Proton acceptor. A disordered region spans residues Gly-343–Ser-425. The segment covering Lys-415 to Ser-425 has biased composition (basic residues).

The protein belongs to the protein kinase superfamily. CK1 Ser/Thr protein kinase family. VRK subfamily.

It is found in the nucleus. Its subcellular location is the cytoplasm. It localises to the cajal body. It catalyses the reaction L-seryl-[protein] + ATP = O-phospho-L-seryl-[protein] + ADP + H(+). It carries out the reaction L-threonyl-[protein] + ATP = O-phospho-L-threonyl-[protein] + ADP + H(+). Serine/threonine kinase involved in the regulation of key cellular processes including the cell cycle, nuclear condensation, transcription regulation, and DNA damage response. Controls chromatin organization and remodeling by mediating phosphorylation of histone H3 on 'Thr-4' and histone H2AX (H2aXT4ph). It also phosphorylates KAT5 in response to DNA damage, promoting KAT5 association with chromatin and histone acetyltransferase activity. Is involved in the regulation of cell cycle progression of neural progenitors, and is required for proper cortical neuronal migration. Is involved in neurite elongation and branching in motor neurons, and has an essential role in Cajal bodies assembly, acting through COIL phosphorylation and the control of coilin degradation. Involved in Golgi disassembly during the cell cycle: following phosphorylation by PLK3 during mitosis, it is required to induce Golgi fragmentation. Phosphorylates BANF1: disrupts its ability to bind DNA, reduces its binding to LEM domain-containing proteins and causes its relocalization from the nucleus to the cytoplasm. Phosphorylates TP53BP1 and p53/TP53 on 'Thr-18', preventing the interaction between p53/TP53 and MDM2. Phosphorylates ATF2 which activates its transcriptional activity. Phosphorylates JUN. The polypeptide is Serine/threonine-protein kinase VRK1 (vrk1) (Danio rerio (Zebrafish)).